The following is a 325-amino-acid chain: Biotin synthase (325 aa).

A Radical SAM core domain is found at 49–279 (VGDKVELCSI…DKNIRYAGGR (231 aa)). Residues Cys-66, Cys-70, and Cys-73 each contribute to the [4Fe-4S] cluster site. Residues Cys-144, Cys-204, and Arg-274 each contribute to the [2Fe-2S] cluster site.

Belongs to the radical SAM superfamily. Biotin synthase family. In terms of assembly, homodimer. Requires [4Fe-4S] cluster as cofactor. It depends on [2Fe-2S] cluster as a cofactor.

The enzyme catalyses (4R,5S)-dethiobiotin + (sulfur carrier)-SH + 2 reduced [2Fe-2S]-[ferredoxin] + 2 S-adenosyl-L-methionine = (sulfur carrier)-H + biotin + 2 5'-deoxyadenosine + 2 L-methionine + 2 oxidized [2Fe-2S]-[ferredoxin]. The protein operates within cofactor biosynthesis; biotin biosynthesis; biotin from 7,8-diaminononanoate: step 2/2. Functionally, catalyzes the conversion of dethiobiotin (DTB) to biotin by the insertion of a sulfur atom into dethiobiotin via a radical-based mechanism. The sequence is that of Biotin synthase from Carboxydothermus hydrogenoformans (strain ATCC BAA-161 / DSM 6008 / Z-2901).